We begin with the raw amino-acid sequence, 59 residues long: Large ribosomal subunit protein bL32 (59 aa).

The disordered stretch occupies residues 1-40 (MAVQQNKKSPSKRGMHRSHDFLRTTPLSVDPGTGEVHLRH).

It belongs to the bacterial ribosomal protein bL32 family.

The chain is Large ribosomal subunit protein bL32 from Nitrosospira multiformis (strain ATCC 25196 / NCIMB 11849 / C 71).